We begin with the raw amino-acid sequence, 794 residues long: Zinc finger protein 148 (794 aa).

K6 is covalently cross-linked (Glycyl lysine isopeptide (Lys-Gly) (interchain with G-Cter in SUMO2)). S51 is subject to Phosphoserine. Glycyl lysine isopeptide (Lys-Gly) (interchain with G-Cter in SUMO2) cross-links involve residues K88, K115, and K132. Residues 171–193 form a C2H2-type 1 zinc finger; that stretch reads HVCEHCNAAFRTNYHLQRHVFIH. Phosphothreonine is present on T194. 2 consecutive C2H2-type zinc fingers follow at residues 199–221 and 227–249; these read FQCS…EKIH and FRCD…KRTH. Phosphoserine is present on S250. The C2H2-type 4 zinc finger occupies 255–278; it reads YQCEYCLQYFSRTDRVLKHKRMCH. K291 is covalently cross-linked (Glycyl lysine isopeptide (Lys-Gly) (interchain with G-Cter in SUMO2)). The segment at 298–336 is disordered; it reads EEDSGFSTSPKDNSLPKKKRQKTEKKSSGMDKESALDKS. S301 and S306 each carry phosphoserine. K308 is covalently cross-linked (Glycyl lysine isopeptide (Lys-Gly) (interchain with G-Cter in SUMO2)). The span at 321–336 shows a compositional bias: basic and acidic residues; the sequence is EKKSSGMDKESALDKS. Residue K356 forms a Glycyl lysine isopeptide (Lys-Gly) (interchain with G-Cter in SUMO1); alternate linkage. Residue K356 forms a Glycyl lysine isopeptide (Lys-Gly) (interchain with G-Cter in SUMO2); alternate linkage. Residue K402 forms a Glycyl lysine isopeptide (Lys-Gly) (interchain with G-Cter in SUMO2) linkage. The residue at position 412 (S412) is a Phosphoserine. Glycyl lysine isopeptide (Lys-Gly) (interchain with G-Cter in SUMO2) cross-links involve residues K421 and K424. Residues 574-588 show a composition bias toward polar residues; sequence NSSEVPEVTPSENVG. The interval 574-596 is disordered; that stretch reads NSSEVPEVTPSENVGSSSQASSS. At K607 the chain carries N6-acetyllysine. S665 and S784 each carry phosphoserine.

This sequence belongs to the krueppel C2H2-type zinc-finger protein family. As to quaternary structure, interacts with HNRNPDL. Interacts with the 5FMC complex; the interaction requires association with CHTOP. Interacts with CAVIN1. In terms of processing, sumoylated with SUMO2. Desumoylated by SENP3, resulting in the stimulation of transcription of its target genes.

Its subcellular location is the nucleus. Functionally, involved in transcriptional regulation. Represses the transcription of a number of genes including gastrin, stromelysin and enolase. Binds to the G-rich box in the enhancer region of these genes. In Homo sapiens (Human), this protein is Zinc finger protein 148 (ZNF148).